We begin with the raw amino-acid sequence, 400 residues long: Argininosuccinate synthase (400 aa).

10-18 is an ATP binding site; the sequence is AFSGGLDTT. An L-citrulline-binding site is contributed by Tyr87. Gly117 serves as a coordination point for ATP. L-aspartate contacts are provided by Thr119, Asn123, and Asp124. Asn123 contacts L-citrulline. Arg127, Ser173, Ser182, Glu255, and Tyr267 together coordinate L-citrulline.

This sequence belongs to the argininosuccinate synthase family. Type 1 subfamily. Homotetramer.

The protein resides in the cytoplasm. It carries out the reaction L-citrulline + L-aspartate + ATP = 2-(N(omega)-L-arginino)succinate + AMP + diphosphate + H(+). Its pathway is amino-acid biosynthesis; L-arginine biosynthesis; L-arginine from L-ornithine and carbamoyl phosphate: step 2/3. The chain is Argininosuccinate synthase from Natronomonas pharaonis (strain ATCC 35678 / DSM 2160 / CIP 103997 / JCM 8858 / NBRC 14720 / NCIMB 2260 / Gabara) (Halobacterium pharaonis).